Here is a 161-residue protein sequence, read N- to C-terminus: Transcription elongation factor GreA (161 aa).

Residues 45–72 (NAEYHSAKEKLKLIDIQIAELNAVISKA) adopt a coiled-coil conformation.

This sequence belongs to the GreA/GreB family.

Functionally, necessary for efficient RNA polymerase transcription elongation past template-encoded arresting sites. The arresting sites in DNA have the property of trapping a certain fraction of elongating RNA polymerases that pass through, resulting in locked ternary complexes. Cleavage of the nascent transcript by cleavage factors such as GreA or GreB allows the resumption of elongation from the new 3'terminus. GreA releases sequences of 2 to 3 nucleotides. In Aliarcobacter butzleri (strain RM4018) (Arcobacter butzleri), this protein is Transcription elongation factor GreA.